A 268-amino-acid chain; its full sequence is Putative ABC transporter ATP-binding protein LMOf2365_1216 (268 aa).

The region spanning 2–237 (LKTEHISFQY…KSNVEQAGLV (236 aa)) is the ABC transporter domain. 35 to 42 (GANGSGKS) is a binding site for ATP.

This sequence belongs to the ABC transporter superfamily.

Its subcellular location is the cell membrane. Functionally, probably part of an ABC transporter complex. Responsible for energy coupling to the transport system. The chain is Putative ABC transporter ATP-binding protein LMOf2365_1216 from Listeria monocytogenes serotype 4b (strain F2365).